The sequence spans 382 residues: Lipid-A-disaccharide synthase (382 aa).

It belongs to the LpxB family.

It carries out the reaction 2-N,3-O-bis[(3R)-3-hydroxytetradecanoyl]-alpha-D-glucosaminyl 1-phosphate + UDP-2-N,3-O-bis[(3R)-3-hydroxytetradecanoyl]-alpha-D-glucosamine = lipid A disaccharide (E. coli) + UDP + H(+). The enzyme catalyses a lipid X + a UDP-2-N,3-O-bis[(3R)-3-hydroxyacyl]-alpha-D-glucosamine = a lipid A disaccharide + UDP + H(+). The protein operates within glycolipid biosynthesis; lipid IV(A) biosynthesis; lipid IV(A) from (3R)-3-hydroxytetradecanoyl-[acyl-carrier-protein] and UDP-N-acetyl-alpha-D-glucosamine: step 5/6. Its function is as follows. Condensation of UDP-2,3-diacylglucosamine and 2,3-diacylglucosamine-1-phosphate to form lipid A disaccharide, a precursor of lipid A, a phosphorylated glycolipid that anchors the lipopolysaccharide to the outer membrane of the cell. The polypeptide is Lipid-A-disaccharide synthase (Escherichia coli (strain K12 / MC4100 / BW2952)).